The following is a 212-amino-acid chain: MITIALPKGALLEDSISIFKKAGLNFSDALLENNRSLTIESECKRAKALLVRNGDVPVYVSYGQADLGIVGYDVLQESELKVAKLLDLEFGGCHMSLAVKNTSNYSKPTDLPANCKVASKFTKTARAYFDDLNIPVEIVHLTGSVELGPITGMAEAIVDLVATGKTLKENGLSKIDDLFYSTARLIANPLSIRLDSNPLRDVILSIESFKGT.

The protein belongs to the ATP phosphoribosyltransferase family. Short subfamily. Heteromultimer composed of HisG and HisZ subunits.

The protein resides in the cytoplasm. The catalysed reaction is 1-(5-phospho-beta-D-ribosyl)-ATP + diphosphate = 5-phospho-alpha-D-ribose 1-diphosphate + ATP. It functions in the pathway amino-acid biosynthesis; L-histidine biosynthesis; L-histidine from 5-phospho-alpha-D-ribose 1-diphosphate: step 1/9. Catalyzes the condensation of ATP and 5-phosphoribose 1-diphosphate to form N'-(5'-phosphoribosyl)-ATP (PR-ATP). Has a crucial role in the pathway because the rate of histidine biosynthesis seems to be controlled primarily by regulation of HisG enzymatic activity. The polypeptide is ATP phosphoribosyltransferase (Prochlorococcus marinus (strain MIT 9515)).